The chain runs to 301 residues: Lipoyl synthase (301 aa).

[4Fe-4S] cluster is bound by residues C53, C58, C64, C79, C83, C86, and S290. The region spanning W65–K279 is the Radical SAM core domain.

The protein belongs to the radical SAM superfamily. Lipoyl synthase family. It depends on [4Fe-4S] cluster as a cofactor.

The protein resides in the cytoplasm. It carries out the reaction [[Fe-S] cluster scaffold protein carrying a second [4Fe-4S](2+) cluster] + N(6)-octanoyl-L-lysyl-[protein] + 2 oxidized [2Fe-2S]-[ferredoxin] + 2 S-adenosyl-L-methionine + 4 H(+) = [[Fe-S] cluster scaffold protein] + N(6)-[(R)-dihydrolipoyl]-L-lysyl-[protein] + 4 Fe(3+) + 2 hydrogen sulfide + 2 5'-deoxyadenosine + 2 L-methionine + 2 reduced [2Fe-2S]-[ferredoxin]. The protein operates within protein modification; protein lipoylation via endogenous pathway; protein N(6)-(lipoyl)lysine from octanoyl-[acyl-carrier-protein]: step 2/2. Functionally, catalyzes the radical-mediated insertion of two sulfur atoms into the C-6 and C-8 positions of the octanoyl moiety bound to the lipoyl domains of lipoate-dependent enzymes, thereby converting the octanoylated domains into lipoylated derivatives. The polypeptide is Lipoyl synthase (Leptospira interrogans serogroup Icterohaemorrhagiae serovar copenhageni (strain Fiocruz L1-130)).